The sequence spans 243 residues: Phosphoribosylaminoimidazole-succinocarboxamide synthase (243 aa).

The protein belongs to the SAICAR synthetase family.

The enzyme catalyses 5-amino-1-(5-phospho-D-ribosyl)imidazole-4-carboxylate + L-aspartate + ATP = (2S)-2-[5-amino-1-(5-phospho-beta-D-ribosyl)imidazole-4-carboxamido]succinate + ADP + phosphate + 2 H(+). The protein operates within purine metabolism; IMP biosynthesis via de novo pathway; 5-amino-1-(5-phospho-D-ribosyl)imidazole-4-carboxamide from 5-amino-1-(5-phospho-D-ribosyl)imidazole-4-carboxylate: step 1/2. The protein is Phosphoribosylaminoimidazole-succinocarboxamide synthase of Lactiplantibacillus plantarum (strain ATCC BAA-793 / NCIMB 8826 / WCFS1) (Lactobacillus plantarum).